Consider the following 93-residue polypeptide: Small ribosomal subunit protein uS19 (93 aa).

This sequence belongs to the universal ribosomal protein uS19 family.

Protein S19 forms a complex with S13 that binds strongly to the 16S ribosomal RNA. The protein is Small ribosomal subunit protein uS19 of Clostridioides difficile (strain 630) (Peptoclostridium difficile).